Consider the following 316-residue polypeptide: Cyclin-dependent kinase inhibitor 1C (316 aa).

Omega-N-methylarginine is present on R107. The interval 124-153 is disordered; that stretch reads ESLDGLEEAPEQLPSVPVPAPASTPPPVPV. Residues 139 to 153 are compositionally biased toward pro residues; sequence VPVPAPASTPPPVPV. A run of 9 repeats spans residues 156–159, 160–163, 180–183, 184–187, 188–191, 198–201, 202–205, 206–209, and 210–213. Positions 156 to 213 are 9 X 4 AA repeats of P-A-P-A; the sequence is PAPAPAPAPVAAPVAAPVAVAVLAPAPAPAPAPAPAPAPVAAPAPAPAPAPAPAPAPA. Pro residues predominate over residues 181–217; sequence APAPAPAPAPAPAPVAAPAPAPAPAPAPAPAPAPAPD. A disordered region spans residues 181–260; it reads APAPAPAPAP…AAGTAAASAN (80 aa). Over residues 223 to 233 the composition is skewed to polar residues; the sequence is SAEQGANQGQR. The segment covering 251–260 has biased composition (low complexity); it reads AAGTAAASAN. S268 bears the Phosphoserine mark. Positions 278–281 match the Nuclear localization signal motif; the sequence is KRKR. The segment at 278-316 is disordered; the sequence is KRKRSAPEKSSGDVPAPCPSPSAAPGVGSVEQTPRKRLR.

This sequence belongs to the CDI family. Interacts with PCNA. In terms of tissue distribution, expressed in the heart, brain, lung, skeletal muscle, kidney, pancreas and testis. Expressed in the eye. High levels are seen in the placenta while low levels are seen in the liver.

It is found in the nucleus. Its function is as follows. Potent tight-binding inhibitor of several G1 cyclin/CDK complexes (cyclin E-CDK2, cyclin D2-CDK4, and cyclin A-CDK2) and, to lesser extent, of the mitotic cyclin B-CDC2. Negative regulator of cell proliferation. May play a role in maintenance of the non-proliferative state throughout life. This Homo sapiens (Human) protein is Cyclin-dependent kinase inhibitor 1C (CDKN1C).